The sequence spans 275 residues: Large ribosomal subunit protein uL2 (275 aa).

The tract at residues 222 to 275 (GVAMNPVDHPHGGGEGRNKGRHPTSPWGQKSKGLKTRNNKRTDSMIIRRRAKKK) is disordered. Over residues 229 to 239 (DHPHGGGEGRN) the composition is skewed to basic and acidic residues.

Belongs to the universal ribosomal protein uL2 family. In terms of assembly, part of the 50S ribosomal subunit. Forms a bridge to the 30S subunit in the 70S ribosome.

One of the primary rRNA binding proteins. Required for association of the 30S and 50S subunits to form the 70S ribosome, for tRNA binding and peptide bond formation. It has been suggested to have peptidyltransferase activity; this is somewhat controversial. Makes several contacts with the 16S rRNA in the 70S ribosome. The chain is Large ribosomal subunit protein uL2 from Psychrobacter arcticus (strain DSM 17307 / VKM B-2377 / 273-4).